The following is a 512-amino-acid chain: Probable amidase At4g34880 (512 aa).

Catalysis depends on charge relay system residues K117 and S198. S222 functions as the Acyl-ester intermediate in the catalytic mechanism.

It belongs to the amidase family. As to expression, expressed in vasculature of roots, cotyledons, leaves and sepals.

The catalysed reaction is a monocarboxylic acid amide + H2O = a monocarboxylate + NH4(+). In Arabidopsis thaliana (Mouse-ear cress), this protein is Probable amidase At4g34880.